Consider the following 328-residue polypeptide: 4-hydroxy-3-methylbut-2-enyl diphosphate reductase (328 aa).

C24 is a [4Fe-4S] cluster binding site. 2 residues coordinate (2E)-4-hydroxy-3-methylbut-2-enyl diphosphate: H55 and H88. Dimethylallyl diphosphate-binding residues include H55 and H88. Residues H55 and H88 each coordinate isopentenyl diphosphate. A [4Fe-4S] cluster-binding site is contributed by C110. H138 is a binding site for (2E)-4-hydroxy-3-methylbut-2-enyl diphosphate. H138 serves as a coordination point for dimethylallyl diphosphate. H138 provides a ligand contact to isopentenyl diphosphate. The active-site Proton donor is the E140. Residue T178 participates in (2E)-4-hydroxy-3-methylbut-2-enyl diphosphate binding. Residue C208 coordinates [4Fe-4S] cluster. (2E)-4-hydroxy-3-methylbut-2-enyl diphosphate-binding residues include S236, S237, N238, and S279. Residues S236, S237, N238, and S279 each coordinate dimethylallyl diphosphate. Isopentenyl diphosphate is bound by residues S236, S237, N238, and S279.

This sequence belongs to the IspH family. [4Fe-4S] cluster serves as cofactor.

It carries out the reaction isopentenyl diphosphate + 2 oxidized [2Fe-2S]-[ferredoxin] + H2O = (2E)-4-hydroxy-3-methylbut-2-enyl diphosphate + 2 reduced [2Fe-2S]-[ferredoxin] + 2 H(+). It catalyses the reaction dimethylallyl diphosphate + 2 oxidized [2Fe-2S]-[ferredoxin] + H2O = (2E)-4-hydroxy-3-methylbut-2-enyl diphosphate + 2 reduced [2Fe-2S]-[ferredoxin] + 2 H(+). It participates in isoprenoid biosynthesis; dimethylallyl diphosphate biosynthesis; dimethylallyl diphosphate from (2E)-4-hydroxy-3-methylbutenyl diphosphate: step 1/1. The protein operates within isoprenoid biosynthesis; isopentenyl diphosphate biosynthesis via DXP pathway; isopentenyl diphosphate from 1-deoxy-D-xylulose 5-phosphate: step 6/6. Functionally, catalyzes the conversion of 1-hydroxy-2-methyl-2-(E)-butenyl 4-diphosphate (HMBPP) into a mixture of isopentenyl diphosphate (IPP) and dimethylallyl diphosphate (DMAPP). Acts in the terminal step of the DOXP/MEP pathway for isoprenoid precursor biosynthesis. The polypeptide is 4-hydroxy-3-methylbut-2-enyl diphosphate reductase (Ehrlichia ruminantium (strain Welgevonden)).